The chain runs to 252 residues: 5-oxoprolinase subunit A (252 aa).

Belongs to the LamB/PxpA family. In terms of assembly, forms a complex composed of PxpA, PxpB and PxpC.

The catalysed reaction is 5-oxo-L-proline + ATP + 2 H2O = L-glutamate + ADP + phosphate + H(+). In terms of biological role, catalyzes the cleavage of 5-oxoproline to form L-glutamate coupled to the hydrolysis of ATP to ADP and inorganic phosphate. In Photorhabdus laumondii subsp. laumondii (strain DSM 15139 / CIP 105565 / TT01) (Photorhabdus luminescens subsp. laumondii), this protein is 5-oxoprolinase subunit A.